The sequence spans 288 residues: NAD(P)H-hydrate epimerase (288 aa).

Residues 1–32 (MSGLRALLGLGLLVAGSRLSRVRVQAGSCRAG) constitute a mitochondrion transit peptide. A Phosphoserine modification is found at serine 49. In terms of domain architecture, YjeF N-terminal spans 65 to 275 (AQAVDQELFN…ALEKKYQLNL (211 aa)). 119-123 (NNGGD) is a binding site for (6S)-NADPHX. Asparagine 120 lines the K(+) pocket. The residue at position 144 (lysine 144) is an N6-succinyllysine. A K(+)-binding site is contributed by aspartate 185. (6S)-NADPHX is bound by residues 189–195 (GFSFTGE) and aspartate 218. Serine 221 contributes to the K(+) binding site.

The protein belongs to the NnrE/AIBP family. Homodimer. Interacts with APOA1 and APOA2. K(+) serves as cofactor. In terms of processing, undergoes physiological phosphorylation during sperm capacitation, downstream to PKA activation.

The protein localises to the mitochondrion. It is found in the secreted. It carries out the reaction (6R)-NADHX = (6S)-NADHX. The enzyme catalyses (6R)-NADPHX = (6S)-NADPHX. Functionally, catalyzes the epimerization of the S- and R-forms of NAD(P)HX, a damaged form of NAD(P)H that is a result of enzymatic or heat-dependent hydration. This is a prerequisite for the S-specific NAD(P)H-hydrate dehydratase to allow the repair of both epimers of NAD(P)HX. Accelerates cholesterol efflux from endothelial cells to high-density lipoprotein (HDL) and thereby regulates angiogenesis. This chain is NAD(P)H-hydrate epimerase, found in Bos taurus (Bovine).